Consider the following 208-residue polypeptide: Small ribosomal subunit protein uS4 (208 aa).

Residues 96–159 (SRLDNIVYRL…KKNEKVLEAL (64 aa)) enclose the S4 RNA-binding domain.

This sequence belongs to the universal ribosomal protein uS4 family. As to quaternary structure, part of the 30S ribosomal subunit. Contacts protein S5. The interaction surface between S4 and S5 is involved in control of translational fidelity.

Its function is as follows. One of the primary rRNA binding proteins, it binds directly to 16S rRNA where it nucleates assembly of the body of the 30S subunit. With S5 and S12 plays an important role in translational accuracy. The sequence is that of Small ribosomal subunit protein uS4 from Mycoplasma capricolum subsp. capricolum (strain California kid / ATCC 27343 / NCTC 10154).